We begin with the raw amino-acid sequence, 127 residues long: Holotricin-2 (127 aa).

Residues 1–15 (MMKLVIALCLIGISA) form the signal peptide. Positions 16–55 (AYVVPVYYEIYPEDATFDEADIEPQLSPAELHHGSIRERR) are excised as a propeptide. The disordered stretch occupies residues 43 to 84 (PAELHHGSIRERRSLQPGAPSFPMPGSQLPTSVSGNVEKQGR). The span at 45 to 56 (ELHHGSIRERRS) shows a compositional bias: basic and acidic residues. The span at 70-84 (QLPTSVSGNVEKQGR) shows a compositional bias: polar residues.

Belongs to the coleoptericin family. In terms of tissue distribution, hemolymph.

Its subcellular location is the secreted. Functionally, antibacterial activity against Gram-negative bacteria but not against Gram-positive bacteria. The chain is Holotricin-2 from Holotrichia diomphalia (Korean black chafer).